Here is a 112-residue protein sequence, read N- to C-terminus: UPF0060 membrane protein CMS0846 (112 aa).

The next 4 membrane-spanning stretches (helical) occupy residues 6–26, 32–52, 61–81, and 87–107; these read VILFALAAVAEIGGAWLIWQA, PFWWAGLGVMALGAYGFIATL, ILAAYGGVFVAGSLLWGTVVD, and RWDVIGAVVCLVGVAVIMAAP.

It belongs to the UPF0060 family.

The protein resides in the cell membrane. This chain is UPF0060 membrane protein CMS0846, found in Clavibacter sepedonicus (Clavibacter michiganensis subsp. sepedonicus).